Reading from the N-terminus, the 88-residue chain is Small ribosomal subunit protein uS15c (88 aa).

Belongs to the universal ribosomal protein uS15 family. In terms of assembly, part of the 30S ribosomal subunit.

The protein localises to the plastid. Its subcellular location is the chloroplast. The polypeptide is Small ribosomal subunit protein uS15c (rps15) (Pinus koraiensis (Korean pine)).